A 557-amino-acid chain; its full sequence is Tight junction-associated protein 1 (557 aa).

The disordered stretch occupies residues 1–37 (MTSAAPAKKPYRKAPPEHRELRLEIPGSRLEQEEPLT). Threonine 2 is subject to N-acetylthreonine. The segment covering 14–23 (APPEHRELRL) has biased composition (basic and acidic residues). A coiled-coil region spans residues 42–171 (MKLLQEENEE…EELNERYRLD (130 aa)). 2 disordered regions span residues 266-303 (MSEGVPGDPASPPAPGSPTPQPNGECHSLGTARGSPEE) and 309-328 (AFEKLNPYPTPSPPHPLYPG). Over residues 274 to 286 (PASPPAPGSPTPQ) the composition is skewed to pro residues. Serine 300 bears the Phosphoserine mark. The segment covering 316–325 (YPTPSPPHPL) has biased composition (pro residues). A Phosphothreonine modification is found at threonine 318. 2 positions are modified to phosphoserine: serine 320 and serine 345. The segment at 364–409 (EEGSERARPSPVPSTPASAQASPHHQPSPAPLTLSAPASSASSEED) is disordered. The segment covering 378 to 388 (TPASAQASPHH) has biased composition (polar residues). Positions 394–405 (PLTLSAPASSAS) are enriched in low complexity. A Phosphothreonine modification is found at threonine 422. The span at 439 to 456 (LPELQRHFAHSPADRDEV) shows a compositional bias: basic and acidic residues. Positions 439 to 557 (LPELQRHFAH…QAQEQGNLLN (119 aa)) are disordered. Serine 491 carries the post-translational modification Phosphoserine. Over residues 530–542 (RSPKRMGVHHLHR) the composition is skewed to basic residues. Serine 545 is subject to Phosphoserine. A compositionally biased stretch (polar residues) spans 546–557 (LTQAQEQGNLLN).

As to quaternary structure, interacts with DLG1. Interacts with ARF6 (GTP-bound form). Ubiquitously expressed.

The protein localises to the golgi apparatus. It localises to the trans-Golgi network. Its subcellular location is the cell junction. It is found in the tight junction. The protein resides in the cell membrane. Functionally, plays a role in regulating the structure of the Golgi apparatus. This chain is Tight junction-associated protein 1, found in Homo sapiens (Human).